The chain runs to 309 residues: MIIFSGGTGTPKLLDGLKEILPAEEMTVVVNTAEDLWVSGNLICPDLDTVIYLFSDQIDRNRWWGVKDDTFLTYERMQKLGVMESMKLGDCDRATHIIRSNFIRSGISLTDAILELASIFGIDAKILPMSDDPVSTYIEAPEAILHFQDFWIGKHGEPEVLGVDITGISEASISPKVLEALENDDNVLIGPSNPITSIGPIISLPGMKDLLKKKKVVAVSPIIGNAPVSGPAGKLMKACGLEVSSMGVAEYYQDFLDIFVFDERDQADEFAFEKLGCRASRADTLMTSTEKSKELAELVVGLFDTIVCP.

Residues D48 and K87 each coordinate 7,8-didemethyl-8-hydroxy-5-deazariboflavin.

This sequence belongs to the CofD family. As to quaternary structure, homodimer. Mg(2+) serves as cofactor.

It carries out the reaction (2S)-lactyl-2-diphospho-5'-guanosine + 7,8-didemethyl-8-hydroxy-5-deazariboflavin = oxidized coenzyme F420-0 + GMP + H(+). It functions in the pathway cofactor biosynthesis; coenzyme F420 biosynthesis. Catalyzes the transfer of the 2-phospholactate moiety from (2S)-lactyl-2-diphospho-5'-guanosine to 7,8-didemethyl-8-hydroxy-5-deazariboflavin (FO) with the formation of oxidized coenzyme F420-0 and GMP. This is 2-phospho-L-lactate transferase from Methanosarcina barkeri (strain Fusaro / DSM 804).